We begin with the raw amino-acid sequence, 436 residues long: UDP-N-acetylmuramate--L-alanine ligase (436 aa).

108–114 (GAHGKTS) is a binding site for ATP.

This sequence belongs to the MurCDEF family.

It localises to the cytoplasm. It catalyses the reaction UDP-N-acetyl-alpha-D-muramate + L-alanine + ATP = UDP-N-acetyl-alpha-D-muramoyl-L-alanine + ADP + phosphate + H(+). It functions in the pathway cell wall biogenesis; peptidoglycan biosynthesis. In terms of biological role, cell wall formation. The protein is UDP-N-acetylmuramate--L-alanine ligase of Bacillus cereus (strain AH187).